Consider the following 174-residue polypeptide: Large ribosomal subunit protein uL16 (174 aa).

Belongs to the universal ribosomal protein uL16 family.

The sequence is that of Large ribosomal subunit protein uL16 from Staphylothermus marinus (strain ATCC 43588 / DSM 3639 / JCM 9404 / F1).